Reading from the N-terminus, the 152-residue chain is 1,4-dihydroxy-2-naphthoyl-CoA hydrolase (152 aa).

Asp20 is an active-site residue.

This sequence belongs to the 4-hydroxybenzoyl-CoA thioesterase family. DHNA-CoA hydrolase subfamily.

The enzyme catalyses 1,4-dihydroxy-2-naphthoyl-CoA + H2O = 1,4-dihydroxy-2-naphthoate + CoA + H(+). Its pathway is cofactor biosynthesis; phylloquinone biosynthesis. It participates in quinol/quinone metabolism; 1,4-dihydroxy-2-naphthoate biosynthesis; 1,4-dihydroxy-2-naphthoate from chorismate: step 7/7. Catalyzes the hydrolysis of 1,4-dihydroxy-2-naphthoyl-CoA (DHNA-CoA) to 1,4-dihydroxy-2-naphthoate (DHNA), a reaction involved in phylloquinone (vitamin K1) biosynthesis. This Synechococcus sp. (strain CC9311) protein is 1,4-dihydroxy-2-naphthoyl-CoA hydrolase.